A 335-amino-acid polypeptide reads, in one-letter code: Probable cyclin-H (335 aa).

Belongs to the cyclin family. Cyclin C subfamily.

It is found in the nucleus. In terms of biological role, regulates CDK7, the catalytic subunit of the CDK-activating kinase (CAK) enzymatic complex. This chain is Probable cyclin-H (CYCH), found in Echinococcus multilocularis (Fox tapeworm).